A 236-amino-acid polypeptide reads, in one-letter code: Small ribosomal subunit protein uS2c (236 aa).

It belongs to the universal ribosomal protein uS2 family.

It is found in the plastid. Its subcellular location is the chloroplast. This Guizotia abyssinica (Niger) protein is Small ribosomal subunit protein uS2c (rps2).